Consider the following 334-residue polypeptide: Probable tRNA pseudouridine synthase B (334 aa).

The active-site Nucleophile is the aspartate 82. The PUA domain occupies 250 to 325 (LPKIWIKDSA…IAVDVEKVFM (76 aa)).

It belongs to the pseudouridine synthase TruB family. Type 2 subfamily.

It carries out the reaction uridine(55) in tRNA = pseudouridine(55) in tRNA. Functionally, could be responsible for synthesis of pseudouridine from uracil-55 in the psi GC loop of transfer RNAs. The polypeptide is Probable tRNA pseudouridine synthase B (Pyrococcus abyssi (strain GE5 / Orsay)).